A 398-amino-acid chain; its full sequence is Argininosuccinate synthase (398 aa).

10–18 (AYSGGLDTS) contributes to the ATP binding site. L-citrulline is bound at residue Tyr-87. Gly-117 contacts ATP. Positions 119, 123, and 124 each coordinate L-aspartate. An L-citrulline-binding site is contributed by Asn-123. The L-citrulline site is built by Arg-127, Ser-175, Glu-260, and Tyr-272.

It belongs to the argininosuccinate synthase family. Type 1 subfamily. Homotetramer.

It is found in the cytoplasm. The catalysed reaction is L-citrulline + L-aspartate + ATP = 2-(N(omega)-L-arginino)succinate + AMP + diphosphate + H(+). The protein operates within amino-acid biosynthesis; L-arginine biosynthesis; L-arginine from L-ornithine and carbamoyl phosphate: step 2/3. This is Argininosuccinate synthase from Lactococcus lactis subsp. lactis (strain IL1403) (Streptococcus lactis).